A 43-amino-acid chain; its full sequence is Cytochrome b559 subunit beta (43 aa).

The helical transmembrane segment at 18-34 threads the bilayer; it reads WLAIHGLAIPTVFFFGA. His22 provides a ligand contact to heme.

This sequence belongs to the PsbE/PsbF family. In terms of assembly, heterodimer of an alpha subunit and a beta subunit. PSII is composed of 1 copy each of membrane proteins PsbA, PsbB, PsbC, PsbD, PsbE, PsbF, PsbH, PsbI, PsbJ, PsbK, PsbL, PsbM, PsbT, PsbY, PsbZ, Psb30/Ycf12, at least 3 peripheral proteins of the oxygen-evolving complex and a large number of cofactors. It forms dimeric complexes. Requires heme b as cofactor.

The protein localises to the plastid. It localises to the chloroplast thylakoid membrane. Its function is as follows. This b-type cytochrome is tightly associated with the reaction center of photosystem II (PSII). PSII is a light-driven water:plastoquinone oxidoreductase that uses light energy to abstract electrons from H(2)O, generating O(2) and a proton gradient subsequently used for ATP formation. It consists of a core antenna complex that captures photons, and an electron transfer chain that converts photonic excitation into a charge separation. The protein is Cytochrome b559 subunit beta of Cyanidium caldarium (Red alga).